The following is a 345-amino-acid chain: Glycerol-3-phosphate dehydrogenase [NAD(P)+] (345 aa).

Serine 11, tryptophan 12, histidine 32, arginine 33, and lysine 106 together coordinate NADPH. Lysine 106, glycine 137, and serine 139 together coordinate sn-glycerol 3-phosphate. NADPH is bound at residue alanine 141. Sn-glycerol 3-phosphate is bound by residues lysine 192, aspartate 245, serine 255, arginine 256, and asparagine 257. The active-site Proton acceptor is lysine 192. Residue arginine 256 coordinates NADPH. NADPH-binding residues include valine 280 and glutamate 282.

This sequence belongs to the NAD-dependent glycerol-3-phosphate dehydrogenase family.

The protein localises to the cytoplasm. The enzyme catalyses sn-glycerol 3-phosphate + NAD(+) = dihydroxyacetone phosphate + NADH + H(+). It carries out the reaction sn-glycerol 3-phosphate + NADP(+) = dihydroxyacetone phosphate + NADPH + H(+). It participates in membrane lipid metabolism; glycerophospholipid metabolism. Its function is as follows. Catalyzes the reduction of the glycolytic intermediate dihydroxyacetone phosphate (DHAP) to sn-glycerol 3-phosphate (G3P), the key precursor for phospholipid synthesis. The chain is Glycerol-3-phosphate dehydrogenase [NAD(P)+] from Bacillus pumilus (strain SAFR-032).